The sequence spans 177 residues: Large ribosomal subunit protein uL6 (177 aa).

The span at 152-171 (RPPEPYKGKGVRYDDEEVRR) shows a compositional bias: basic and acidic residues. Residues 152–177 (RPPEPYKGKGVRYDDEEVRRKEAKKK) are disordered.

The protein belongs to the universal ribosomal protein uL6 family. Part of the 50S ribosomal subunit.

This protein binds to the 23S rRNA, and is important in its secondary structure. It is located near the subunit interface in the base of the L7/L12 stalk, and near the tRNA binding site of the peptidyltransferase center. The sequence is that of Large ribosomal subunit protein uL6 from Shewanella sp. (strain ANA-3).